Consider the following 902-residue polypeptide: Androgen receptor (902 aa).

The modulating stretch occupies residues 1-540; the sequence is MEVQLGLGRV…PIDYYFPPQK (540 aa). An interaction with ZNF318 region spans residues 1–569; it reads MEVQLGLGRV…GSCKVFFKRA (569 aa). Disordered stretches follow at residues 35–146 and 194–224; these read QNPG…LSLL and QQEVISEGSSSVRAREATGAPSSSKDSYLGG. At Ser61 the chain carries Phosphoserine; by CDK9. At Ser75 the chain carries Phosphoserine. The segment covering 94–103 has biased composition (low complexity); it reads QPSQQQSASE. 2 stretches are compositionally biased toward polar residues: residues 196 to 205 and 213 to 224; these read EVISEGSSSV and APSSSKDSYLGG. Tyr221 carries the phosphotyrosine; by CSK modification. Ser254 is subject to Phosphoserine. Tyr265 is subject to Phosphotyrosine; by CSK and TNK2. Ser290 carries the phosphoserine modification. A phosphotyrosine; by CSK mark is found at Tyr305, Tyr344, Tyr355, and Tyr360. At Tyr361 the chain carries Phosphotyrosine; by CSK and TNK2. A Glycyl lysine isopeptide (Lys-Gly) (interchain with G-Cter in SUMO) cross-link involves residue Lys384. A Phosphotyrosine; by CSK modification is found at Tyr391. Positions 439 to 465 are disordered; it reads EGQLYGPGGGGGSSSPSDAGPVAPYGY. Lys503 is covalently cross-linked (Glycyl lysine isopeptide (Lys-Gly) (interchain with G-Cter in SUMO)). Phosphotyrosine; by CSK is present on residues Tyr517 and Tyr534. The segment at 534–901 is interaction with LPXN; the sequence is YYFPPQKTCL…GKVKPIYFHT (368 aa). The nuclear receptor DNA-binding region spans 541 to 614; it reads TCLICGDEAS…AGMTLGARKL (74 aa). NR C4-type zinc fingers lie at residues 542–562 and 578–602; these read CLICGDEASGCHYGALTCGSC and CASRNDCTIDKFRRKNCPSCRLRKC. The interaction with HIPK3 stretch occupies residues 554-644; that stretch reads YGALTCGSCK…TEDPSQKMTV (91 aa). Residues 574–901 form an interaction with CCAR1 region; it reads QKYLCASRND…GKVKPIYFHT (328 aa). An interaction with KAT7 region spans residues 607–901; the sequence is MTLGARKLKK…GKVKPIYFHT (295 aa). Position 633 is a phosphoserine (Ser633). The NR LBD domain occupies 651–882; it reads ECQPIFLNVL…DFPEMMAEII (232 aa). Positions 688 and 735 each coordinate 17beta-hydroxy-5alpha-androstan-3-one. Glycyl lysine isopeptide (Lys-Gly) (interchain with G-Cter in ubiquitin) cross-links involve residues Lys828 and Lys830. A 17beta-hydroxy-5alpha-androstan-3-one-binding site is contributed by Thr860. Residue Tyr898 is modified to Phosphotyrosine; by CSK.

The protein belongs to the nuclear hormone receptor family. NR3 subfamily. As to quaternary structure, binds DNA as a homodimer. Part of a ternary complex containing AR, EFCAB6/DJBP and PARK7. Interacts with HIPK3 and NR0B2 in the presence of androgen. The ligand binding domain interacts with KAT7/HBO1 in the presence of dihydrotestosterone. Interacts with EFCAB6/DJBP, PQBP1, RANBP9, RBAK, SPDEF, SRA1, TGFB1I1, ZNF318 and RREB1. Interacts with ZMIZ1/ZIMP10 and ZMIZ2/ZMIP7 which both enhance its transactivation activity. Interacts with SLC30A9 and RAD54L2/ARIP4. Interacts with MACROD1 (via macro domain). Interacts via the ligand-binding domain with LXXLL and FXXLF motifs from NCOA1, NCOA2, NCOA3 and MAGEA11. Interacts (via nuclear receptor DNA binding domain and nuclear receptor ligand binding domain) with NCOA4. The AR N-terminal poly-Gln region binds Ran resulting in enhancement of AR-mediated transactivation. Ran-binding decreases as the poly-Gln length increases. Interacts with HIP1 (via coiled coil domain). Interacts (via ligand-binding domain) with TRIM68. Interacts with TNK2. Interacts with USP26. Interacts with RNF6. Interacts (regulated by RNF6 probably through polyubiquitination) with RNF14; regulates AR transcriptional activity. Interacts with PRMT2 and TRIM24. Interacts with RACK1. Interacts with RANBP10; this interaction enhances dihydrotestosterone-induced AR transcriptional activity. Interacts with PRPF6 in a hormone-independent way; this interaction enhances dihydrotestosterone-induced AR transcriptional activity. Interacts with STK4/MST1. Interacts with ZIPK/DAPK3. Interacts with LPXN. Interacts with MAK. Part of a complex containing AR, MAK and NCOA3. Interacts with CRY1. Interacts with CCAR1 and GATA2. Interacts with BUD31. Interacts with ARID4A. Interacts with ARID4B. Interacts (via NR LBD domain) with ZBTB7A; the interaction is direct and androgen-dependent. Interacts with NCOR1. Interacts with NCOR2. Interacts with CRY2 in a ligand-dependent manner. In terms of processing, phosphorylated in prostate cancer cells in response to several growth factors including EGF. Phosphorylation is induced by c-Src kinase (CSK). Tyr-517 is one of the major phosphorylation sites and an increase in phosphorylation and Src kinase activity is associated with prostate cancer progression. Phosphorylation by TNK2 enhances the DNA-binding and transcriptional activity. Phosphorylation at Ser-61 by CDK9 regulates AR promoter selectivity and cell growth. Phosphorylation by PAK6 leads to AR-mediated transcription inhibition. Sumoylated on Lys-384 (major) and Lys-503. Ubiquitinated. Deubiquitinated by USP26. 'Lys-6' and 'Lys-27'-linked polyubiquitination by RNF6 modulates AR transcriptional activity and specificity. Post-translationally, palmitoylated by ZDHHC7 and ZDHHC21. Palmitoylation is required for plasma membrane targeting and for rapid intracellular signaling via ERK and AKT kinases and cAMP generation. In terms of tissue distribution, highest levels in the seminal vesicle, ventral prostate and coagulating gland with lower levels in the kidney and levator ani muscle.

Its subcellular location is the nucleus. The protein resides in the cytoplasm. Its function is as follows. Steroid hormone receptors are ligand-activated transcription factors that regulate eukaryotic gene expression and affect cellular proliferation and differentiation in target tissues. Transcription factor activity is modulated by bound coactivator and corepressor proteins like ZBTB7A that recruits NCOR1 and NCOR2 to the androgen response elements/ARE on target genes, negatively regulating androgen receptor signaling and androgen-induced cell proliferation. Transcription activation is also down-regulated by NR0B2. Activated, but not phosphorylated, by HIPK3 and ZIPK/DAPK3. This is Androgen receptor (Ar) from Rattus norvegicus (Rat).